Consider the following 127-residue polypeptide: Egg cell-secreted protein 1.4 (127 aa).

The first 25 residues, 1–25, serve as a signal peptide directing secretion; the sequence is MASNTTFLFSTVTLLIILLNTTVSG.

The protein belongs to the plant egg cell-secreted peptide family. In terms of tissue distribution, restricted to female reproductive tissues, specifically accumulating in storage vesicles of the unfertilized egg cell.

It is found in the cytoplasmic vesicle. Its subcellular location is the secreted. In terms of biological role, involved in the regulation of gamete interactions during the double fertilization and to prevent multiple-pollen tube attraction; mediates the redistribution of the gamete fusogen HAP2/GCS1 to the cell surface after secretion upon sperm arrival. The sequence is that of Egg cell-secreted protein 1.4 (EC1.4) from Arabidopsis thaliana (Mouse-ear cress).